We begin with the raw amino-acid sequence, 266 residues long: Glucosamine-6-phosphate deaminase (266 aa).

Catalysis depends on Asp72, which acts as the Proton acceptor; for enolization step. The For ring-opening step role is filled by Asp141. His143 serves as the catalytic Proton acceptor; for ring-opening step. Residue Glu148 is the For ring-opening step of the active site.

It belongs to the glucosamine/galactosamine-6-phosphate isomerase family. NagB subfamily. As to quaternary structure, homohexamer; trimer of disulfide-linked dimers.

It catalyses the reaction alpha-D-glucosamine 6-phosphate + H2O = beta-D-fructose 6-phosphate + NH4(+). Its pathway is amino-sugar metabolism; N-acetylneuraminate degradation; D-fructose 6-phosphate from N-acetylneuraminate: step 5/5. With respect to regulation, allosterically activated by N-acetylglucosamine 6-phosphate (GlcNAc6P). Catalyzes the reversible isomerization-deamination of glucosamine 6-phosphate (GlcN6P) to form fructose 6-phosphate (Fru6P) and ammonium ion. This Shigella flexneri serotype 5b (strain 8401) protein is Glucosamine-6-phosphate deaminase.